Reading from the N-terminus, the 205-residue chain is MAKRLVEELERDGIVKSERVKRALLTVPREEFVLPEYRMMAYEDRPLPLFAGATISAPHMVAMMCELIEPRPGMKILEVGTGSGYHAAVCAEAIEKKGRIYTIEIVKELAVFAAQNLERLGYWGVVEVYHGDGKKGLEKHAPFDAIIVTAAADVIPPALIRQLKDGGVMVIPVEERLGQVLYKVVKRGDKIEKKAITYVMFVPLR.

Ser56 is an active-site residue.

The protein belongs to the methyltransferase superfamily. L-isoaspartyl/D-aspartyl protein methyltransferase family.

It is found in the cytoplasm. It catalyses the reaction [protein]-L-isoaspartate + S-adenosyl-L-methionine = [protein]-L-isoaspartate alpha-methyl ester + S-adenosyl-L-homocysteine. Functionally, catalyzes the methyl esterification of L-isoaspartyl residues in peptides and proteins that result from spontaneous decomposition of normal L-aspartyl and L-asparaginyl residues. It plays a role in the repair and/or degradation of damaged proteins. The sequence is that of Protein-L-isoaspartate O-methyltransferase from Pyrobaculum aerophilum (strain ATCC 51768 / DSM 7523 / JCM 9630 / CIP 104966 / NBRC 100827 / IM2).